The following is a 660-amino-acid chain: Acyl-coenzyme A oxidase acox-1.3 (660 aa).

FAD is bound by residues 146–149 (YAQT), 154–155 (GT), and Gly188. Substrate is bound by residues 282–285 (KIGY) and Arg292. FAD contacts are provided by residues Arg317 and 337–340 (QQHR). The ATP site is built by His339, Ser389, His393, and Gln401. Substrate is bound at residue 430–431 (YE). The active-site Proton acceptor is Glu431. Glu433 serves as a coordination point for FAD. Residues 524–527 (RASR) and Tyr572 each bind ATP. A Microbody targeting signal motif is present at residues 658–660 (AKL).

It belongs to the acyl-CoA oxidase family. In terms of assembly, forms a heterodimer with acox-1.1; the interaction may be important for the stability of acox-1.3. It depends on FAD as a cofactor.

The protein resides in the peroxisome. It carries out the reaction asc-C7-CoA + O2 = asc-DeltaC7-CoA + H2O2. It functions in the pathway lipid metabolism; peroxisomal fatty acid beta-oxidation. With respect to regulation, activated by ATP. ATP binding leads to a conformational change that promotes FAD cofactor binding and enzyme activity. ATP binding likely occurs during acox-1.3 folding and/or dimer formation. Involved in the first step of peroxisomal beta-oxidation by catalyzing the desaturation of fatty acid-derived side chains of ascaroside pheromones, which regulates development and behavior. Specifically, shortens ascarosides with a 7-carbon side chain (asc-C7). Does not catalyze the desaturation of fatty acids or hydroxylated fatty acids. Involved in the biosynthesis of asc-C6-MK (daumone 2) and asc-delta-C9 (daumone 3) but not asc-C7 (daumone 1); daumones are pheromones produced during unfavourable growth conditions which promote entry into the dauer stage. In Caenorhabditis elegans, this protein is Acyl-coenzyme A oxidase acox-1.3.